The sequence spans 243 residues: Complement C1q tumor necrosis factor-related protein 5 (243 aa).

The N-terminal stretch at 1–15 (MRPLLVLLLLGLAAG) is a signal peptide. The segment at 15-125 (GSPPLDDNKI…PPPSDAPLPF (111 aa)) is disordered. Positions 30–95 (GHPGLPGTPG…AGPAGPTGPA (66 aa)) constitute a Collagen-like domain. The span at 83–96 (RGEAGPAGPTGPAG) shows a compositional bias: low complexity. A C1q domain is found at 99-238 (SVPPRSAFSA…GFLVYSDWHS (140 aa)).

As to quaternary structure, may interact with ERFE. Homotrimer (via collagen-like domain). May form higher order oligomers by supercoiling of the trimers.

Its subcellular location is the secreted. This chain is Complement C1q tumor necrosis factor-related protein 5 (C1QTNF5), found in Homo sapiens (Human).